Here is a 1241-residue protein sequence, read N- to C-terminus: MIENWPKKPEGSQWTDDQWKAVVANGRDILVAAAAGSGKTAVLVERIIKKIINEENPVDVDRLLVVTFTNAAAQEMKNRIGEALEKVLIDEPGSQHVRKQLSLLNKASISTIHSFCLQVIRGYYYMLDVDPRFRIANQTENELLKEEVLDDILEEEYGIEDNTIFFELVDRYTSDRSDDDLQRMILALHTESRAHPNPEKWLDKLVEAYDVEGKTIEDLVYASYLLEDVKFQLETAEQHIRKATELAMLPDGPAPRIETLQADLALLGTLSSAAHESWTSLYEAMQNVSWQTLKRIKKSDYNEDVVKQVDSLRNKAKDEVKKLQEELFSRKPESFLRDFQDMHPVLEKLVQLVKVFTERFQAMKRDKGMVDFTDLEHFCLQILSEQSENGEMNPSAVALQYRNKFAEVLVDEYQDTNFVQESIIKFVTKDSESEGNLFMVGDVKQSIYRFRLAEPGLFLGKYKRFTQEGLGGGMKIDLAKNFRSRHEVLAGTNFIFKQIMGEEVGEIDYDADAELKLGATYPEGEDVAAELLCIQQTEEEVIDGEEGAEVEKAQLEARLMAQRIKAMVDSGYEVYDRKNDSMRPVQYRDFVILLRSMPWAPQIMEELKLQGIPVYADLATGYFEATEVNIMMNVFRVIDNPMQDIPLAAVLRSPIVGLSDEELATLRAHGKKGSFYEVMSSFLKGAPLEEEQELHDKLEWFYNLLQGWREFARQQSLSDLIWKVYGETGYYDFVGGLPAGKQRQANLRVLYDRARQYEATSFRGLFRFLRFIERILERGDDMGTARALGEQEDVVRIMTIHKSKGLEFPVVFVAGLGRRFNTQDLMKRFLLHKDFGFGSQFIDPRKRIKYTTLSQLAIKRKMKMELIAEEMRVLYVALTRAKEKLILIGTVKDANKEMEKWLDAREHSEWLLPDHIRAGASCYLDWIAPSLYRHRDSEMLLELGQGSIPDEIYGYDTSWKVEVVDGNTLLAPEPVQEEKQELLEALREKKAVPLESERKDEVYDRLMWKYGYEEATSHRAKQSVTEIKRNYQSEDGSDNAFIKKLRAPIKTRPRFMEKKGLTYAERGTAVHAVMQHVDLKKPITVEVLQEQIAGMVNKELLTFEQAEEIAIEKVISFFDSDLGKKVLAAKSVEREVPFTMMLAAEEAYQDWQGNSGESILVQGVIDCMIEEEDGITLIDFKTDTIEGKFPGGFEQAKPILEDRYKVQLSLYAKALEKSLQHPVKEKCLYFFDGNHVVNIEE.

The region spanning 12–485 is the UvrD-like helicase ATP-binding domain; it reads SQWTDDQWKA…IDLAKNFRSR (474 aa). 33-40 provides a ligand contact to ATP; the sequence is AAAGSGKT. Residues 505–805 form the UvrD-like helicase C-terminal domain; the sequence is GEIDYDADAE…RIMTIHKSKG (301 aa).

This sequence belongs to the helicase family. AddA subfamily. As to quaternary structure, heterodimer of AddA and AddB/RexB. Mg(2+) is required as a cofactor.

The enzyme catalyses Couples ATP hydrolysis with the unwinding of duplex DNA by translocating in the 3'-5' direction.. It catalyses the reaction ATP + H2O = ADP + phosphate + H(+). The heterodimer acts as both an ATP-dependent DNA helicase and an ATP-dependent, dual-direction single-stranded exonuclease. Recognizes the chi site generating a DNA molecule suitable for the initiation of homologous recombination. The AddA nuclease domain is required for chi fragment generation; this subunit has the helicase and 3' -&gt; 5' nuclease activities. The sequence is that of ATP-dependent helicase/nuclease subunit A from Bacillus cereus (strain B4264).